The following is a 589-amino-acid chain: Kelch-like protein 25 (589 aa).

One can recognise a BTB domain in the interval 46 to 114 (TDMTLWAGNR…AYSSKIIINE (69 aa)). Residues 149–250 (CLGMMILSDA…LPSELLKEAV (102 aa)) enclose the BACK domain. 6 Kelch repeats span residues 296 to 340 (TLLI…AIGC), 341 to 388 (KVYI…ELDN), 389 to 444 (CLYV…SAKL), 446 to 492 (LFVF…VLGS), 494 to 538 (IFIM…ASGN), and 539 to 585 (KVYV…STWK).

Component of the BCR(KLHL25) E3 ubiquitin ligase complex, at least composed of cul3, klhl25 and rbx1.

Its pathway is protein modification; protein ubiquitination. In terms of biological role, substrate-specific adapter of a BCR (BTB-CUL3-RBX1) E3 ubiquitin ligase complex involved in various processes, such as translation homeostasis and lipid synthesis. The BCR(KLHL25) ubiquitin ligase complex acts by mediating ubiquitination of hypophosphorylated eif4ebp1 (4E-BP1): ubiquitination and subsequent degradation of hypophosphorylated EIF4EBP1 (4E-BP1) probably serves as a homeostatic mechanism to maintain translation and prevent eIF4E inhibition when eIF4E levels are low. The BCR(KLHL25) complex also acts as a regulator of lipid synthesis by mediating ubiquitination and degradation of ACLY, thereby inhibiting lipid synthesis. The protein is Kelch-like protein 25 of Xenopus laevis (African clawed frog).